Reading from the N-terminus, the 427-residue chain is Nuclear distribution protein PAC1-2 (427 aa).

The region spanning 8-40 (QKDDLNKSIAEYLYAQDLTEIADSLCARLSLDY) is the LisH domain. A coiled-coil region spans residues 58-82 (SVIRLQKKLIESENRYTALQEDIAA). WD repeat units lie at residues 106–147 (SHRA…RTLK), 149–187 (HTREVWGVDFDSKGSFLATCSSDLSIKVWDTQQWDNAGY), 194–233 (GHEHTVSTVKFLPGDDLIASASRDKTIRIWEVATTFCIRT), 236–275 (GHEDWVRMTVPSTDGTLLGSCSSDNTARVWDPTSGVMKME), 278–336 (GHGH…ELRT), 339–378 (GHNDWIRGLVFHPSGKHLLSASDDKTIRVWELSTGRCMXV), and 381–420 (AHSHFITCLAWGPPVSAVARVELPRTPFCGDPKPIASRIM).

The protein belongs to the WD repeat LIS1/nudF family. Self-associates. Interacts with NDL1 and dynein.

It is found in the cytoplasm. The protein localises to the cytoskeleton. It localises to the spindle pole. Functionally, positively regulates the activity of the minus-end directed microtubule motor protein dynein. May enhance dynein-mediated microtubule sliding by targeting dynein to the microtubule plus end. Required for nuclear migration during vegetative growth as well as development. Required for retrograde early endosome (EE) transport from the hyphal tip. Required for localization of dynein to the mitotic spindle poles. Recruits additional proteins to the dynein complex at SPBs. This is Nuclear distribution protein PAC1-2 from Postia placenta (strain ATCC 44394 / Madison 698-R) (Brown rot fungus).